Consider the following 471-residue polypeptide: ATP synthase subunit beta (471 aa).

Residue 156–163 (GGAGVGKT) coordinates ATP.

Belongs to the ATPase alpha/beta chains family. In terms of assembly, F-type ATPases have 2 components, CF(1) - the catalytic core - and CF(0) - the membrane proton channel. CF(1) has five subunits: alpha(3), beta(3), gamma(1), delta(1), epsilon(1). CF(0) has three main subunits: a(1), b(2) and c(9-12). The alpha and beta chains form an alternating ring which encloses part of the gamma chain. CF(1) is attached to CF(0) by a central stalk formed by the gamma and epsilon chains, while a peripheral stalk is formed by the delta and b chains.

It is found in the cell membrane. The enzyme catalyses ATP + H2O + 4 H(+)(in) = ADP + phosphate + 5 H(+)(out). Produces ATP from ADP in the presence of a proton gradient across the membrane. The catalytic sites are hosted primarily by the beta subunits. In Lawsonia intracellularis (strain PHE/MN1-00), this protein is ATP synthase subunit beta.